A 700-amino-acid polypeptide reads, in one-letter code: Receptor-type tyrosine-protein phosphatase epsilon (700 aa).

An N-terminal signal peptide occupies residues 1-19 (MEPLCPLLLVGFSLPLARA). At 20–46 (LRGNETTADSNETTTTSGPPDPGASQP) the chain is on the extracellular side. N-linked (GlcNAc...) asparagine glycosylation is found at Asn23 and Asn30. The chain crosses the membrane as a helical span at residues 47-69 (LLAWLLLPLLLLLLVLLLAAYFF). Residues 70-700 (RFRKQRKAVV…DIFSDYANFK (631 aa)) lie on the Cytoplasmic side of the membrane. Tyrosine-protein phosphatase domains follow at residues 135–394 (FREE…LLEY) and 426–689 (LEEE…VQDF). Residues Asp303, 335–341 (CSAGVGR), and Gln379 each bind substrate. Cys335 (phosphocysteine intermediate) is an active-site residue. The active-site Phosphocysteine intermediate is Cys630. Tyr696 bears the Phosphotyrosine mark.

The protein belongs to the protein-tyrosine phosphatase family. Receptor class 4 subfamily. As to quaternary structure, monomer. Isoform 2: Homodimer. Can form oligomers. Dimerization is increased by oxidative stress and decreased by EGFR. Isoform 2 interacts with GRB2. A catalytically active cytoplasmic form (p65) is produced by proteolytic cleavage of either isoform 1, isoform 2 or isoform 3. Post-translationally, isoform 1 and isoform 2 are phosphorylated on tyrosine residues by tyrosine kinase Neu. In terms of processing, isoform 1 is glycosylated. Expressed in giant cell tumor (osteoclastoma rich in multinucleated osteoclastic cells).

It is found in the cell membrane. It localises to the cytoplasm. It carries out the reaction O-phospho-L-tyrosyl-[protein] + H2O = L-tyrosyl-[protein] + phosphate. In terms of biological role, isoform 1 plays a critical role in signaling transduction pathways and phosphoprotein network topology in red blood cells. May play a role in osteoclast formation and function. Its function is as follows. Isoform 2 acts as a negative regulator of insulin receptor (IR) signaling in skeletal muscle. Regulates insulin-induced tyrosine phosphorylation of insulin receptor (IR) and insulin receptor substrate 1 (IRS-1), phosphorylation of protein kinase B and glycogen synthase kinase-3 and insulin induced stimulation of glucose uptake. Isoform 1 and isoform 2 act as a negative regulator of FceRI-mediated signal transduction leading to cytokine production and degranulation, most likely by acting at the level of SYK to affect downstream events such as phosphorylation of SLP76 and LAT and mobilization of Ca(2+). This is Receptor-type tyrosine-protein phosphatase epsilon (PTPRE) from Homo sapiens (Human).